Consider the following 63-residue polypeptide: Protease 2 small chain (63 aa).

Residues 11-63 (QWGLSGTYGIRANTAWDNGYQGQGKIIAVVDTGITDHPDLLANRTSPLGYDFI) form the Peptidase S8 domain.

It belongs to the peptidase S8 family. In terms of assembly, heterodimer of a large and a small chain.

The protein localises to the secreted. This chain is Protease 2 small chain, found in Achromobacter lyticus.